We begin with the raw amino-acid sequence, 189 residues long: CASP-like protein 1U2 (189 aa).

The Cytoplasmic portion of the chain corresponds to 1–24 (MFGSDDSGCHVMDDDVAPPANGSK). The chain crosses the membrane as a helical span at residues 25 to 45 (AVTLLLRLITLALALTSAVLM). Residues 46–71 (ATASECTIYGLDGATATTVTFKDYQP) lie on the Extracellular side of the membrane. A helical transmembrane segment spans residues 72–92 (FIYLVGSNIAATILEVAAIYV). The Cytoplasmic portion of the chain corresponds to 93–109 (QVGKGDDVEDAPMIPRV). Residues 110-130 (VLVVVDVAVQMLLYSATGAVF) form a helical membrane-spanning segment. The Extracellular segment spans residues 131-158 (AAVMAYGPQISACTGAAGHFCEQVQRSK). Residues 159 to 179 (IISLAASLSAVLAAVAKDVAL) traverse the membrane as a helical segment. At 180-189 (PCSVWPHPSS) the chain is on the cytoplasmic side.

Belongs to the Casparian strip membrane proteins (CASP) family. In terms of assembly, homodimer and heterodimers.

The protein localises to the cell membrane. The protein is CASP-like protein 1U2 of Sorghum bicolor (Sorghum).